The primary structure comprises 252 residues: 5'-methylthioadenosine/S-adenosylhomocysteine nucleosidase (252 aa).

Glu20 (proton acceptor) is an active-site residue. Substrate-binding positions include Gly86, Ile160, and 181 to 182; that span reads ME. Asp205 acts as the Proton donor in catalysis.

Belongs to the PNP/UDP phosphorylase family. MtnN subfamily. As to quaternary structure, homodimer.

The enzyme catalyses S-adenosyl-L-homocysteine + H2O = S-(5-deoxy-D-ribos-5-yl)-L-homocysteine + adenine. The catalysed reaction is S-methyl-5'-thioadenosine + H2O = 5-(methylsulfanyl)-D-ribose + adenine. It catalyses the reaction 5'-deoxyadenosine + H2O = 5-deoxy-D-ribose + adenine. The protein operates within amino-acid biosynthesis; L-methionine biosynthesis via salvage pathway; S-methyl-5-thio-alpha-D-ribose 1-phosphate from S-methyl-5'-thioadenosine (hydrolase route): step 1/2. In terms of biological role, catalyzes the irreversible cleavage of the glycosidic bond in both 5'-methylthioadenosine (MTA) and S-adenosylhomocysteine (SAH/AdoHcy) to adenine and the corresponding thioribose, 5'-methylthioribose and S-ribosylhomocysteine, respectively. Also cleaves 5'-deoxyadenosine, a toxic by-product of radical S-adenosylmethionine (SAM) enzymes, into 5-deoxyribose and adenine. Thus, is required for in vivo function of the radical SAM enzymes biotin synthase and lipoic acid synthase, that are inhibited by 5'-deoxyadenosine accumulation. This is 5'-methylthioadenosine/S-adenosylhomocysteine nucleosidase from Buchnera aphidicola subsp. Baizongia pistaciae (strain Bp).